We begin with the raw amino-acid sequence, 258 residues long: Venom plasminogen activator (258 aa).

An N-terminal signal peptide occupies residues 1–18 (MVLIRVLANLLILQLSYA). A propeptide spanning residues 19-24 (QKSSEL) is cleaved from the precursor. The Peptidase S1 domain occupies 25–249 (VVGGDECNIN…YTDWIQSIIS (225 aa)). 6 cysteine pairs are disulfide-bonded: C31-C163, C50-C66, C98-C256, C142-C210, C174-C189, and C200-C225. N44 carries N-linked (GlcNAc...) asparagine glycosylation. Active-site charge relay system residues include H65 and D110. Catalysis depends on S204, which acts as the Charge relay system.

It belongs to the peptidase S1 family. Snake venom subfamily. In terms of assembly, monomer. As to expression, expressed by the venom gland.

It localises to the secreted. Functionally, snake venom serine protease that activates plasminogen. Shows a preferential cleavage at Arg-|-Xaa instead of Lys-|-Xaa bonds. The protein is Venom plasminogen activator of Agkistrodon piscivorus leucostoma (Western cottonmouth).